We begin with the raw amino-acid sequence, 100 residues long: MARQSLIQREKKRHKLEQKYHLIRRSSKKEINKAPSLSDKWKIHGKLQSSPRNSAPTRLHRRCFLTGRPRANYRDFGLSGHILREMVHACLLPGATRSSW.

The protein belongs to the universal ribosomal protein uS14 family. In terms of assembly, part of the 30S ribosomal subunit.

Its subcellular location is the plastid. The protein resides in the chloroplast. Its function is as follows. Binds 16S rRNA, required for the assembly of 30S particles. This Citrus sinensis (Sweet orange) protein is Small ribosomal subunit protein uS14c.